We begin with the raw amino-acid sequence, 488 residues long: Mannitol 2-dehydrogenase (488 aa).

An NAD(+)-binding site is contributed by Ile-37–Ala-48.

It belongs to the mannitol dehydrogenase family. In terms of assembly, monomer.

It carries out the reaction D-mannitol + NAD(+) = D-fructose + NADH + H(+). Its function is as follows. Catalyzes the NAD(H)-dependent interconversion of D-fructose and D-mannitol in the mannitol metabolic pathway. This chain is Mannitol 2-dehydrogenase, found in Aspergillus niger (strain ATCC MYA-4892 / CBS 513.88 / FGSC A1513).